A 459-amino-acid chain; its full sequence is Ceramide glucosyltransferase 3 (459 aa).

Residues 77 to 97 (LIAIVGFVFVFCLYLIHIIAL) traverse the membrane as a helical segment. A short sequence motif (D1) is located at residue aspartate 156. Aspartate 208 is a short sequence motif (D2). A short sequence motif (D3) is located at residue aspartate 302. Catalysis depends on aspartate 302, which acts as the Proton acceptor. The (Q/R)XXRW signature appears at 338 to 342 (RICRW). 2 consecutive transmembrane segments (helical) span residues 367 to 387 (LIMA…ILIL) and 415 to 435 (FMLI…KALL).

Belongs to the glycosyltransferase 2 family. Expressed in pharyngeal intestinal valve, intestinal rectal valve and hypodermis.

The protein resides in the membrane. The enzyme catalyses an N-acylsphing-4-enine + UDP-alpha-D-glucose = a beta-D-glucosyl-(1&lt;-&gt;1')-N-acylsphing-4-enine + UDP + H(+). It catalyses the reaction an N-acyl-15-methylhexadecasphing-4-enine + UDP-alpha-D-glucose = an N-acyl-1-beta-D-glucosyl-15-methylhexadecasphing-4-enine + UDP + H(+). The protein operates within lipid metabolism; sphingolipid metabolism. Catalyzes the first glycosylation step in glycosphingolipid biosynthesis, the transfer of glucose to ceramide to produce glucosylceramides (GlcCer). GlcCer are known to contribute to the physical properties and physiological functions of membranes and may regulate signal transduction. Seems to be the major active form in the nematode. Only branched-chain sphingoid bases like 15-methylhexadecasphing-4-enine are used for generating complex sphingolipids in Caenorhabditis elegans. Together with cgt-1, plays a role in the trafficking of proteins such as mig-14 to the cell membrane in intestinal cells. The polypeptide is Ceramide glucosyltransferase 3 (Caenorhabditis elegans).